A 330-amino-acid chain; its full sequence is Glycerol-3-phosphate dehydrogenase [NAD(P)+] (330 aa).

4 residues coordinate NADPH: serine 10, tryptophan 11, arginine 31, and lysine 105. Residues lysine 105, glycine 135, and serine 137 each contribute to the sn-glycerol 3-phosphate site. Residue alanine 139 participates in NADPH binding. The sn-glycerol 3-phosphate site is built by lysine 190, aspartate 243, serine 253, arginine 254, and asparagine 255. The active-site Proton acceptor is the lysine 190. Arginine 254 lines the NADPH pocket. The NADPH site is built by valine 278 and glutamate 280.

Belongs to the NAD-dependent glycerol-3-phosphate dehydrogenase family.

The protein resides in the cytoplasm. The enzyme catalyses sn-glycerol 3-phosphate + NAD(+) = dihydroxyacetone phosphate + NADH + H(+). It catalyses the reaction sn-glycerol 3-phosphate + NADP(+) = dihydroxyacetone phosphate + NADPH + H(+). It functions in the pathway membrane lipid metabolism; glycerophospholipid metabolism. Functionally, catalyzes the reduction of the glycolytic intermediate dihydroxyacetone phosphate (DHAP) to sn-glycerol 3-phosphate (G3P), the key precursor for phospholipid synthesis. This chain is Glycerol-3-phosphate dehydrogenase [NAD(P)+], found in Solidesulfovibrio magneticus (strain ATCC 700980 / DSM 13731 / RS-1) (Desulfovibrio magneticus).